The primary structure comprises 371 residues: Partitioning defective 6 homolog beta (371 aa).

Phosphoserine occurs at positions 10 and 11. Residues 16-96 (TMEVKSKFGA…PLLRIFIQKK (81 aa)) enclose the PB1 domain. The interaction with PARD3 and CDC42 stretch occupies residues 126–253 (RKKPHIVISM…ITVRPANQRN (128 aa)). A Pseudo-CRIB domain is found at 133–150 (ISMPQDFRPVSSIIDVDI). The PDZ domain occupies 157-250 (RVRLYKYGTE…NLIITVRPAN (94 aa)). 2 disordered regions span residues 253–273 (NNVV…DNSL) and 326–371 (FESG…IITL). Polar residues predominate over residues 326–340 (FESGQNGFSPPQDTS). The segment covering 352–363 (LESRAPDQKLLE) has biased composition (basic and acidic residues).

This sequence belongs to the PAR6 family. As to quaternary structure, interacts with PARD3. Interacts with GTP-bound forms of CDC42, RHOQ/TC10 and RAC1. Interacts with the N-terminal part of PRKCI and PRKCZ. Part of a complex with PARD3, CDC42 or RAC1 and PRKCI or PRKCZ. Part of a complex with LLGL1 and PRKCI. Interacts with ALS2CR19. Interacts with ECT2. Interacts with PALS1. As to expression, expressed in pancreas and in both adult and fetal kidney. Weakly expressed in placenta and lung. Not expressed in other tissues.

The protein resides in the cytoplasm. The protein localises to the cell membrane. It is found in the cell junction. Its subcellular location is the tight junction. Adapter protein involved in asymmetrical cell division and cell polarization processes. Probably involved in formation of epithelial tight junctions. Association with PARD3 may prevent the interaction of PARD3 with F11R/JAM1, thereby preventing tight junction assembly. The PARD6-PARD3 complex links GTP-bound Rho small GTPases to atypical protein kinase C proteins. The chain is Partitioning defective 6 homolog beta (Pard6b) from Mus musculus (Mouse).